The primary structure comprises 75 residues: Small ribosomal subunit protein bS18 (75 aa).

Belongs to the bacterial ribosomal protein bS18 family. Part of the 30S ribosomal subunit. Forms a tight heterodimer with protein bS6.

Binds as a heterodimer with protein bS6 to the central domain of the 16S rRNA, where it helps stabilize the platform of the 30S subunit. This chain is Small ribosomal subunit protein bS18, found in Ruegeria sp. (strain TM1040) (Silicibacter sp.).